A 689-amino-acid polypeptide reads, in one-letter code: Glycine--tRNA ligase beta subunit (689 aa).

Belongs to the class-II aminoacyl-tRNA synthetase family. Tetramer of two alpha and two beta subunits.

It localises to the cytoplasm. It carries out the reaction tRNA(Gly) + glycine + ATP = glycyl-tRNA(Gly) + AMP + diphosphate. This Acinetobacter baumannii (strain ACICU) protein is Glycine--tRNA ligase beta subunit.